Here is a 276-residue protein sequence, read N- to C-terminus: Plant cysteine oxidase 2 (276 aa).

Residues 1-40 (MGTDTVMSGRVRKDLSKTNPNGNIPENRSNSRKKIQRRSK) are disordered. Residues 17 to 28 (KTNPNGNIPENR) are compositionally biased toward polar residues. Residues 30–40 (NSRKKIQRRSK) show a composition bias toward basic residues. H134, H136, and H197 together coordinate Fe cation.

This sequence belongs to the cysteine dioxygenase family. The cofactor is Fe(2+).

Its subcellular location is the nucleus. The protein localises to the cytoplasm. It catalyses the reaction L-cysteine + O2 = 3-sulfino-L-alanine + H(+). Functionally, catalyzes the oxidation of N-terminal cysteine residues (N-Cys), thus preparing the protein for N-end rule pathway-mediated proteasomal degradation, upstream of the N-end rule enzymes ATE1, ATE2 and PRT6. Controls the preparation of the group VII ethylene response factor (ERF-VII) proteins for degradation via the 26S proteasome N-end rule pathway. Acts as an oxygen sensor that controls the stability of ERF-VII proteins, which are stabilized in flooding-induced hypoxia, and regulate transcriptional adaptation to these adverse conditions. Not active on Cys located inside or at the C-terminus of a peptide. Acts redundantly with PCO1 to repress the anaerobic response. In Arabidopsis thaliana (Mouse-ear cress), this protein is Plant cysteine oxidase 2.